Here is a 175-residue protein sequence, read N- to C-terminus: Cytochrome c-550-like protein (175 aa).

The N-terminal stretch at 1–34 (MYQPHFWQRSIGWLCGGLLILLLGWTIAPATALA) is a signal peptide. Residues cysteine 81, cysteine 84, histidine 85, and cysteine 135 each coordinate heme c.

Belongs to the cytochrome c family. PsbV subfamily. Heme c serves as cofactor.

The protein localises to the cellular thylakoid membrane. Its function is as follows. Probable low-potential cytochrome c, can partially replace cytochrome c-550 (PsbV) function. This Thermosynechococcus vestitus (strain NIES-2133 / IAM M-273 / BP-1) protein is Cytochrome c-550-like protein.